We begin with the raw amino-acid sequence, 446 residues long: Methionine aminopeptidase 2 (446 aa).

The interval 1 to 85 is disordered; sequence MAGVTEGEDT…KNKKKKKKKI (85 aa). Over residues 8 to 32 the composition is skewed to basic and acidic residues; the sequence is EDTKVIESKINELNIDKPKLEDNNE. A compositionally biased stretch (acidic residues) spans 42-58; it reads SGDDDDDDKEEDDDNEI. Positions 73 to 85 are enriched in basic residues; that stretch reads KKNKNKKKKKKKI. His197 is a substrate binding site. Residues Asp217, Asp228, and His299 each contribute to the a divalent metal cation site. Residue His307 coordinates substrate. Positions 332 and 427 each coordinate a divalent metal cation.

The protein belongs to the peptidase M24A family. Methionine aminopeptidase eukaryotic type 2 subfamily. It depends on Co(2+) as a cofactor. Zn(2+) is required as a cofactor. The cofactor is Mn(2+). Fe(2+) serves as cofactor.

It is found in the cytoplasm. The enzyme catalyses Release of N-terminal amino acids, preferentially methionine, from peptides and arylamides.. Cotranslationally removes the N-terminal methionine from nascent proteins. The N-terminal methionine is often cleaved when the second residue in the primary sequence is small and uncharged (Met-Ala-, Cys, Gly, Pro, Ser, Thr, or Val). The protein is Methionine aminopeptidase 2 of Candida albicans (strain SC5314 / ATCC MYA-2876) (Yeast).